Reading from the N-terminus, the 465-residue chain is tRNA modification GTPase MnmE (465 aa).

Residues R30, E92, and R132 each coordinate (6S)-5-formyl-5,6,7,8-tetrahydrofolate. One can recognise a TrmE-type G domain in the interval 227 to 388 (GLQVALVGRP…LIEAVLKTCG (162 aa)). N237 contributes to the K(+) binding site. GTP-binding positions include 237-242 (NVGKSS), 256-262 (TDLPGTT), 281-284 (DTAG), and 342-345 (NKAD). S241 is a Mg(2+) binding site. The K(+) site is built by T256, L258, and T261. T262 provides a ligand contact to Mg(2+). K465 contributes to the (6S)-5-formyl-5,6,7,8-tetrahydrofolate binding site.

This sequence belongs to the TRAFAC class TrmE-Era-EngA-EngB-Septin-like GTPase superfamily. TrmE GTPase family. Homodimer. Heterotetramer of two MnmE and two MnmG subunits. Requires K(+) as cofactor.

Its subcellular location is the cytoplasm. Exhibits a very high intrinsic GTPase hydrolysis rate. Involved in the addition of a carboxymethylaminomethyl (cmnm) group at the wobble position (U34) of certain tRNAs, forming tRNA-cmnm(5)s(2)U34. The sequence is that of tRNA modification GTPase MnmE from Prochlorococcus marinus (strain MIT 9303).